Reading from the N-terminus, the 343-residue chain is uncharacterized protein (343 aa).

This is an uncharacterized protein from Nostoc sp. (strain PCC 7120 / SAG 25.82 / UTEX 2576).